The following is a 149-amino-acid chain: Large ribosomal subunit protein uL22 (149 aa).

It belongs to the universal ribosomal protein uL22 family. Part of the 50S ribosomal subunit.

Functionally, this protein binds specifically to 23S rRNA. It makes multiple contacts with different domains of the 23S rRNA in the assembled 50S subunit and ribosome. Its function is as follows. The globular domain of the protein is located near the polypeptide exit tunnel on the outside of the subunit, while an extended beta-hairpin is found that lines the wall of the exit tunnel in the center of the 70S ribosome. In Picrophilus torridus (strain ATCC 700027 / DSM 9790 / JCM 10055 / NBRC 100828 / KAW 2/3), this protein is Large ribosomal subunit protein uL22.